A 360-amino-acid chain; its full sequence is MNAPLGGIWLWLPLLLTWLTPEVNSSWWYMRATGGSSRVMCDNVPGLVSSQRQLCHRHPDVMRAISQGVAEWTAECQHQFRQHRWNCNTLDRDHSLFGRVLLRSSRESAFVYAISSAGVVFAITRACSQGEVKSCSCDPKKMGSAKDSKGIFDWGGCSDNIDYGIKFARAFVDAKERKGKDARALMNLHNNRAGRKAVKRFLKQECKCHGVSGSCTLRTCWLAMADFRKTGDYLWRKYNGAIQVVMNQDGTGFTVANERFKKPTKNDLVYFENSPDYCIRDREAGSLGTAGRVCNLTSRGMDSCEVMCCGRGYDTSHVTRMTKCGCKFHWCCAVRCQDCLEALDVHTCKAPKNADWTTPT.

An N-terminal signal peptide occupies residues 1–25 (MNAPLGGIWLWLPLLLTWLTPEVNS). 11 cysteine pairs are disulfide-bonded: C76–C87, C127–C135, C137–C157, C206–C220, C208–C215, C278–C309, C294–C304, C308–C348, C324–C339, C326–C336, and C331–C332. Residue S212 is the site of O-palmitoleoyl serine; by PORCN attachment. The N-linked (GlcNAc...) asparagine glycan is linked to N295.

This sequence belongs to the Wnt family. Palmitoleoylation is required for efficient binding to frizzled receptors. Depalmitoleoylation leads to Wnt signaling pathway inhibition.

It is found in the secreted. The protein localises to the extracellular space. The protein resides in the extracellular matrix. Functionally, ligand for members of the frizzled family of seven transmembrane receptors. Functions in the canonical Wnt signaling pathway that results in activation of transcription factors of the TCF/LEF family. Functions as a upstream regulator of FGF10 expression. Plays an important role in embryonic lung development. May contribute to embryonic brain development by regulating the proliferation of dopaminergic precursors and neurons. This is Protein Wnt-2 (WNT2) from Gorilla gorilla gorilla (Western lowland gorilla).